Here is a 153-residue protein sequence, read N- to C-terminus: MGTKIVLKKDVDTLGKAGTLVEVAPGYARNYLIPQGLAVKATPGLVKEAEFRQAKRREIEAKHRADALETKKTLEALGFYEVFAPVGEDGNQLFGTVTNQDVAEVVASKAGITIDRREITIEEPIKRTGVYTVKARIFQDVVATLRLQVNAAG.

Belongs to the bacterial ribosomal protein bL9 family.

Its function is as follows. Binds to the 23S rRNA. This is Large ribosomal subunit protein bL9 from Gloeobacter violaceus (strain ATCC 29082 / PCC 7421).